Reading from the N-terminus, the 379-residue chain is UDP-4-amino-4-deoxy-L-arabinose--oxoglutarate aminotransferase (379 aa).

Lys-182 carries the N6-(pyridoxal phosphate)lysine modification.

This sequence belongs to the DegT/DnrJ/EryC1 family. ArnB subfamily. In terms of assembly, homodimer. The cofactor is pyridoxal 5'-phosphate.

It catalyses the reaction UDP-4-amino-4-deoxy-beta-L-arabinose + 2-oxoglutarate = UDP-beta-L-threo-pentopyranos-4-ulose + L-glutamate. The protein operates within nucleotide-sugar biosynthesis; UDP-4-deoxy-4-formamido-beta-L-arabinose biosynthesis; UDP-4-deoxy-4-formamido-beta-L-arabinose from UDP-alpha-D-glucuronate: step 2/3. Its pathway is bacterial outer membrane biogenesis; lipopolysaccharide biosynthesis. Functionally, catalyzes the conversion of UDP-4-keto-arabinose (UDP-Ara4O) to UDP-4-amino-4-deoxy-L-arabinose (UDP-L-Ara4N). The modified arabinose is attached to lipid A and is required for resistance to polymyxin and cationic antimicrobial peptides. This is UDP-4-amino-4-deoxy-L-arabinose--oxoglutarate aminotransferase from Salmonella schwarzengrund (strain CVM19633).